Here is a 412-residue protein sequence, read N- to C-terminus: Maltoporin (412 aa).

The signal sequence occupies residues 1–22 (MKKVSVIAAAVAATLAAGSAFA).

Belongs to the porin LamB (TC 1.B.3) family. As to quaternary structure, homotrimer formed of three 18-stranded antiparallel beta-barrels, containing three independent channels.

The protein resides in the cell outer membrane. It catalyses the reaction beta-maltose(in) = beta-maltose(out). Involved in the transport of maltose and maltodextrins. In Vibrio cholerae serotype O1 (strain ATCC 39315 / El Tor Inaba N16961), this protein is Maltoporin.